The sequence spans 871 residues: Protein pob1 (871 aa).

One can recognise an SH3 domain in the interval 2–65 (ASQRFVIALH…PASHVELISD (64 aa)). The segment at 42–168 (WWEGEDEQGN…PSSDLSNFNT (127 aa)) is disordered. The segment covering 62 to 80 (LISDERSDSSDSRRGKEDF) has biased composition (basic and acidic residues). Composition is skewed to low complexity over residues 88–100 (TRSS…STSS) and 109–124 (LYSN…SILN). Over residues 131–168 (SKPSVPSNFNSMFPSSKQEGPSPLLDNQPSSDLSNFNT) the composition is skewed to polar residues. Phosphoserine occurs at positions 224 and 225. Residue Tyr-229 is modified to Phosphotyrosine. Ser-241 carries the post-translational modification Phosphoserine. The SAM domain occupies 250-313 (WSTEEVVEWL…LRKIQQLKDS (64 aa)). Residues 329 to 343 (ISVSQSSDSSSSIPK) are compositionally biased toward low complexity. 2 disordered regions span residues 329 to 371 (ISVS…NRPT) and 384 to 670 (PDLD…KSKR). 2 stretches are compositionally biased toward polar residues: residues 384–395 (PDLDSSPSTDWN) and 404–451 (TPSS…NSGL). Phosphoserine is present on residues Ser-433, Ser-439, and Ser-440. At Thr-442 the chain carries Phosphothreonine. Residue Ser-444 is modified to Phosphoserine. Positions 456–467 (TEPISSPSTSSI) are enriched in low complexity. Polar residues predominate over residues 492–511 (QPSSNVPTKFTGGASESSSV). At Ser-549 the chain carries Phosphoserine. Positions 549–560 (SPSSISSRLPSS) are enriched in low complexity. Composition is skewed to polar residues over residues 561 to 574 (NLEQ…TKSP) and 583 to 606 (KASS…NYAT). The 111-residue stretch at 698–808 (TADCHGWMRK…WSSAFLKATV (111 aa)) folds into the PH domain.

The protein resides in the cytoplasm. Its subcellular location is the membrane. Has a role in cell elongation and separation. The protein is Protein pob1 (pob1) of Schizosaccharomyces pombe (strain 972 / ATCC 24843) (Fission yeast).